A 3072-amino-acid polypeptide reads, in one-letter code: Eukaryotic translation initiation factor 2-alpha kinase PK4 (3072 aa).

The Cytoplasmic segment spans residues 1–106 (MCNFIKKGIR…EFRWLINKLE (106 aa)). A helical membrane pass occupies residues 107–127 (IIYFYFFCHLLLLCIFQNIFL). At 128-1643 (LTYMSKEYFL…FTSIRYKRRR (1516 aa)) the chain is on the lumenal side. Positions 383 to 402 (KEKCHRDEKCDRGENYDRGE) are disordered. Residues 576-610 (KKKILDENDMITIDNNIDKKENILFPYFHMEILKD) form a 10 X 7 AA tandem repeat of D-K-N-[GE]-L-D-[GD] region. Residues 970 to 1010 (QYEDNNDNDNNKNDNNKNDNNKNDNNKNDNNNNNNNNNNNS) form a disordered region. A compositionally biased stretch (basic and acidic residues) spans 978 to 996 (DNNKNDNNKNDNNKNDNNK). Residues 997 to 1009 (NDNNNNNNNNNNN) show a composition bias toward low complexity. The helical transmembrane segment at 1644–1664 (WYWRVFYTIMFIIFFPVLFIY) threads the bilayer. Topologically, residues 1665 to 3072 (RRIIKRRKGS…IKNENNGADK (1408 aa)) are cytoplasmic. 2 disordered regions span residues 1737 to 1766 (KNYN…SKSN) and 1917 to 1937 (KVGS…KDKK). Low complexity predominate over residues 1738-1766 (NYNNNNNNNNNKNNNNISNNNSNSNSKSN). Residues 1928–1937 (NYTDNEKDKK) show a composition bias toward basic and acidic residues. Residues 2152 to 2160 (IGQGGFGSV) and Lys2177 each bind ATP. Disordered stretches follow at residues 2316 to 2402 (FYSD…EGRD), 2479 to 2558 (RNED…KKLD), and 2691 to 2749 (ENDD…DDDI). The segment covering 2326-2335 (KNKENPEKNH) has biased composition (basic and acidic residues). Basic residues predominate over residues 2362-2384 (HKLKKRKNKKKKSKKKRKSKSKI). Tandem repeats lie at residues 2483–2489 (DKNGLDG), 2490–2496 (DKNGLDG), 2497–2503 (DKNGLDG), 2504–2510 (DKNGLDG), 2511–2517 (DKNGLDG), 2518–2524 (DKNELDG), 2525–2531 (DKNGLDG), 2532–2538 (DKNGLDG), 2539–2545 (DKNGLDG), and 2546–2552 (DKNELDD). Positions 2627–2998 (TNVESINTNG…KIKVLLDPHL (372 aa)) constitute a Protein kinase domain. The segment covering 2692–2702 (NDDDDDDDDDN) has biased composition (acidic residues). Residue Asp2835 is the Proton acceptor of the active site. Thr2902 is subject to Phosphothreonine.

The protein belongs to the protein kinase superfamily. Ser/Thr protein kinase family. GCN2 subfamily. May form oligomers in response to stress; oligomerization may result in catalytic activity. Interacts with BIP; the interaction is disrupted in response to stress. In terms of processing, auto-phosphorylated.

The protein resides in the endoplasmic reticulum membrane. The enzyme catalyses L-seryl-[protein] + ATP = O-phospho-L-seryl-[protein] + ADP + H(+). It carries out the reaction L-threonyl-[protein] + ATP = O-phospho-L-threonyl-[protein] + ADP + H(+). With respect to regulation, dissociation from BIP and oligomerization, may results autophosphorylation and kinase activity induction. Functionally, during the asexual blood stage, phosphorylates translation factor eIF2alpha in late schizonts resulting in protein translation inhibition. Plays a role in trophozoite differentiation into schizonts. The chain is Eukaryotic translation initiation factor 2-alpha kinase PK4 from Plasmodium falciparum (isolate 3D7).